Reading from the N-terminus, the 453-residue chain is Glutamyl-tRNA reductase (453 aa).

Substrate is bound by residues 49-52 (TCNR), Ser109, 114-116 (EQQ), and Gln120. The active-site Nucleophile is the Cys50. 191–196 (GAGSMG) lines the NADP(+) pocket. The tract at residues 432 to 453 (PAAVATPTDLVDGDRTGRDLQA) is disordered. The segment covering 443-453 (DGDRTGRDLQA) has biased composition (basic and acidic residues).

It belongs to the glutamyl-tRNA reductase family. As to quaternary structure, homodimer.

The catalysed reaction is (S)-4-amino-5-oxopentanoate + tRNA(Glu) + NADP(+) = L-glutamyl-tRNA(Glu) + NADPH + H(+). Its pathway is porphyrin-containing compound metabolism; protoporphyrin-IX biosynthesis; 5-aminolevulinate from L-glutamyl-tRNA(Glu): step 1/2. Its function is as follows. Catalyzes the NADPH-dependent reduction of glutamyl-tRNA(Glu) to glutamate 1-semialdehyde (GSA). This is Glutamyl-tRNA reductase from Rhodococcus erythropolis (strain PR4 / NBRC 100887).